Consider the following 195-residue polypeptide: CDP-diacylglycerol--glycerol-3-phosphate 3-phosphatidyltransferase (195 aa).

The next 4 membrane-spanning stretches (helical) occupy residues 7–24 (ITVLRVLLIPIFILLFYL), 60–81 (FGAFLDPVADKLMVAVALVLLV), 134–150 (MLALVILLANPPAFTFW), and 157–173 (FLLIAGGLTLWSMLQYL).

The protein belongs to the CDP-alcohol phosphatidyltransferase class-I family.

The protein localises to the cell membrane. The enzyme catalyses a CDP-1,2-diacyl-sn-glycerol + sn-glycerol 3-phosphate = a 1,2-diacyl-sn-glycero-3-phospho-(1'-sn-glycero-3'-phosphate) + CMP + H(+). Its pathway is phospholipid metabolism; phosphatidylglycerol biosynthesis; phosphatidylglycerol from CDP-diacylglycerol: step 1/2. Its function is as follows. This protein catalyzes the committed step to the synthesis of the acidic phospholipids. In Pseudomonas fluorescens, this protein is CDP-diacylglycerol--glycerol-3-phosphate 3-phosphatidyltransferase (pgsA).